A 642-amino-acid chain; its full sequence is 5-aminolevulinate synthase, non-specific, mitochondrial (642 aa).

Residues 1–56 (METVVRRCPFLSRVPQAFLQKAGKSLLFYAQNCPKMMEVGAKPAPRTVSTSAAQCQ) constitute a mitochondrion transit peptide. The interval 51–109 (SAAQCQQVKETPPANEKEKTAKAAVQQAPDESQMAQTPDGTQLPPGHPSPSTSQSSGSK) is disordered. Residues 79-90 (PDESQMAQTPDG) show a composition bias toward polar residues. Positions 99 to 108 (SPSTSQSSGS) are enriched in low complexity. Positions 219, 336, and 355 each coordinate substrate. Residues Ser-388, His-416, and Thr-444 each coordinate pyridoxal 5'-phosphate. Lys-447 is a catalytic residue. At Lys-447 the chain carries N6-(pyridoxal phosphate)lysine. Thr-476 and Thr-477 together coordinate pyridoxal 5'-phosphate. Thr-564 contacts substrate. The residue at position 578 (Pro-578) is a Hydroxyproline.

The protein belongs to the class-II pyridoxal-phosphate-dependent aminotransferase family. Homodimer. Interacts (hydroxylated form) with VHL. It depends on pyridoxal 5'-phosphate as a cofactor. In normoxia, is hydroxylated at Pro-578, promoting interaction with VHL, initiating ubiquitination and subsequent degradation via the proteasome. Post-translationally, ubiquitinated; in normoxia following hydroxylation and interaction with VHL, leading to its subsequent degradation via the proteasome. In terms of tissue distribution, expressed in the liver, kidney, brain and testis.

It is found in the mitochondrion inner membrane. It catalyses the reaction succinyl-CoA + glycine + H(+) = 5-aminolevulinate + CO2 + CoA. Its pathway is porphyrin-containing compound metabolism; protoporphyrin-IX biosynthesis; 5-aminolevulinate from glycine: step 1/1. Its function is as follows. Catalyzes the pyridoxal 5'-phosphate (PLP)-dependent condensation of succinyl-CoA and glycine to form aminolevulinic acid (ALA), with CoA and CO2 as by-products. In Rattus norvegicus (Rat), this protein is 5-aminolevulinate synthase, non-specific, mitochondrial (Alas1).